Consider the following 320-residue polypeptide: Cytochrome f (320 aa).

The signal sequence occupies residues 1–35; that stretch reads MKLNSLINLIQKSIYSCTLLLIILNIICVAPNSSN. Heme-binding residues include Phe-37, Cys-57, Cys-60, and His-61. Residues 286–306 traverse the membrane as a helical segment; it reads IKGMIVFFFASVLAQIFFVLK.

The protein belongs to the cytochrome f family. The 4 large subunits of the cytochrome b6-f complex are cytochrome b6, subunit IV (17 kDa polypeptide, petD), cytochrome f and the Rieske protein, while the 4 small subunits are PetG, PetL, PetM and PetN. The complex functions as a dimer. Heme is required as a cofactor.

It is found in the plastid. The protein localises to the chloroplast thylakoid membrane. In terms of biological role, component of the cytochrome b6-f complex, which mediates electron transfer between photosystem II (PSII) and photosystem I (PSI), cyclic electron flow around PSI, and state transitions. This Pyropia yezoensis (Susabi-nori) protein is Cytochrome f.